The primary structure comprises 183 residues: Ribonuclease H (183 aa).

The 150-residue stretch at 2-151 folds into the RNase H type-1 domain; sequence SQARFIAFSD…VDQLAQAAAR (150 aa). Aspartate 11, glutamate 57, aspartate 79, and aspartate 143 together coordinate Mg(2+).

Belongs to the RNase H family. Monomer. Mg(2+) is required as a cofactor.

The protein resides in the cytoplasm. It carries out the reaction Endonucleolytic cleavage to 5'-phosphomonoester.. Endonuclease that specifically degrades the RNA of RNA-DNA hybrids. The chain is Ribonuclease H from Anaeromyxobacter dehalogenans (strain 2CP-C).